The primary structure comprises 247 residues: Exosome complex component Rrp4 (247 aa).

Positions 75 to 148 (DDLVIGIVEN…RDPVITVKGK (74 aa)) constitute an S1 motif domain. The region spanning 154–220 (TEGVVVDVKP…QAIKLIELKA (67 aa)) is the KH domain.

It belongs to the RRP4 family. Component of the archaeal exosome complex. Forms a trimer of Rrp4 and/or Csl4 subunits. The trimer associates with a hexameric ring-like arrangement composed of 3 Rrp41-Rrp42 heterodimers.

The protein localises to the cytoplasm. Its function is as follows. Non-catalytic component of the exosome, which is a complex involved in RNA degradation. Increases the RNA binding and the efficiency of RNA degradation. Confers strong poly(A) specificity to the exosome. This chain is Exosome complex component Rrp4, found in Thermosphaera aggregans (strain DSM 11486 / M11TL).